A 471-amino-acid polypeptide reads, in one-letter code: Amidophosphoribosyltransferase (471 aa).

Cys-2 functions as the Nucleophile in the catalytic mechanism. The Glutamine amidotransferase type-2 domain occupies 2–224 (CGIFGIYSYE…PGEIIEIKDG (223 aa)). Cys-255 is a [4Fe-4S] cluster binding site. 3 residues coordinate Mg(2+): Ser-302, Asp-364, and Asp-365. Positions 401, 450, and 453 each coordinate [4Fe-4S] cluster.

This sequence in the C-terminal section; belongs to the purine/pyrimidine phosphoribosyltransferase family. It depends on Mg(2+) as a cofactor. Requires [4Fe-4S] cluster as cofactor.

It catalyses the reaction 5-phospho-beta-D-ribosylamine + L-glutamate + diphosphate = 5-phospho-alpha-D-ribose 1-diphosphate + L-glutamine + H2O. It participates in purine metabolism; IMP biosynthesis via de novo pathway; N(1)-(5-phospho-D-ribosyl)glycinamide from 5-phospho-alpha-D-ribose 1-diphosphate: step 1/2. Functionally, catalyzes the formation of phosphoribosylamine from phosphoribosylpyrophosphate (PRPP) and glutamine. In Methanocaldococcus jannaschii (strain ATCC 43067 / DSM 2661 / JAL-1 / JCM 10045 / NBRC 100440) (Methanococcus jannaschii), this protein is Amidophosphoribosyltransferase.